The primary structure comprises 583 residues: Phosphoglucomutase, cytoplasmic (583 aa).

The segment at 1–20 (MANFKVSRVETTPFEGQKPG) is disordered. Residues arginine 25 and serine 124 each coordinate alpha-D-glucose 1,6-bisphosphate. Serine 124 serves as the catalytic Phosphoserine intermediate. Serine 124, aspartate 300, aspartate 302, and aspartate 304 together coordinate Mg(2+). The residue at position 124 (serine 124) is a Phosphoserine. Alpha-D-glucose 1,6-bisphosphate contacts are provided by aspartate 304, arginine 305, threonine 368, glutamate 387, serine 389, and lysine 400.

The protein belongs to the phosphohexose mutase family. Monomer. Requires Mg(2+) as cofactor.

The protein localises to the cytoplasm. The enzyme catalyses alpha-D-glucose 1-phosphate = alpha-D-glucose 6-phosphate. It carries out the reaction O-phospho-L-seryl-[protein] + alpha-D-glucose 1-phosphate = alpha-D-glucose 1,6-bisphosphate + L-seryl-[protein]. It catalyses the reaction alpha-D-glucose 1,6-bisphosphate + L-seryl-[protein] = O-phospho-L-seryl-[protein] + alpha-D-glucose 6-phosphate. In terms of biological role, catalyzes the reversible isomerization of alpha-D-glucose 1-phosphate to alpha-D-glucose 6-phosphate. The mechanism proceeds via the intermediate compound alpha-D-glucose 1,6-bisphosphate. This enzyme participates in both the breakdown and synthesis of glucose. The protein is Phosphoglucomutase, cytoplasmic (PGM1) of Solanum tuberosum (Potato).